The sequence spans 220 residues: Translation initiation factor 6 (220 aa).

The protein belongs to the eIF-6 family.

Its function is as follows. Binds to the 50S ribosomal subunit and prevents its association with the 30S ribosomal subunit to form the 70S initiation complex. This chain is Translation initiation factor 6, found in Pyrobaculum aerophilum (strain ATCC 51768 / DSM 7523 / JCM 9630 / CIP 104966 / NBRC 100827 / IM2).